Reading from the N-terminus, the 273-residue chain is Transmembrane epididymal protein 1 (273 aa).

6 consecutive transmembrane segments (helical) span residues 34–54, 72–92, 96–116, 129–149, 158–178, and 195–215; these read IVTGSLLTFYVVLCLDGGMVL, LTMFILLTLNGCVDFMSKNVL, CVGLEKGTLVLIIYELLLLMV, VYSLLILVVFLLLLVLTAELW, LMETFLILMMGSWLMQAGFIL, and IMFVTTFFCWHVMINASFLLG.

This sequence belongs to the TMEM45 family.

Its subcellular location is the membrane. The polypeptide is Transmembrane epididymal protein 1 (TEDDM1) (Homo sapiens (Human)).